Consider the following 305-residue polypeptide: Ribosomal RNA small subunit methyltransferase H (305 aa).

Residues 33–35 (GGY), Asp51, Phe78, Asp96, and Gln103 each bind S-adenosyl-L-methionine.

It belongs to the methyltransferase superfamily. RsmH family.

The protein localises to the cytoplasm. It carries out the reaction cytidine(1402) in 16S rRNA + S-adenosyl-L-methionine = N(4)-methylcytidine(1402) in 16S rRNA + S-adenosyl-L-homocysteine + H(+). Its function is as follows. Specifically methylates the N4 position of cytidine in position 1402 (C1402) of 16S rRNA. The sequence is that of Ribosomal RNA small subunit methyltransferase H from Rickettsia bellii (strain RML369-C).